A 191-amino-acid chain; its full sequence is Iron-sulfur flavoprotein (191 aa).

[4Fe-4S] cluster contacts are provided by C47, C50, C53, and C59.

Belongs to the SsuE family. Isf subfamily. Homodimer. It depends on FMN as a cofactor. [4Fe-4S] cluster is required as a cofactor.

In terms of biological role, redox-active protein probably involved in electron transport during fermentation of acetate to methane. The chain is Iron-sulfur flavoprotein (isf) from Methanosarcina thermophila.